We begin with the raw amino-acid sequence, 236 residues long: Phosphoribosylaminoimidazole-succinocarboxamide synthase (236 aa).

The protein belongs to the SAICAR synthetase family.

It carries out the reaction 5-amino-1-(5-phospho-D-ribosyl)imidazole-4-carboxylate + L-aspartate + ATP = (2S)-2-[5-amino-1-(5-phospho-beta-D-ribosyl)imidazole-4-carboxamido]succinate + ADP + phosphate + 2 H(+). It functions in the pathway purine metabolism; IMP biosynthesis via de novo pathway; 5-amino-1-(5-phospho-D-ribosyl)imidazole-4-carboxamide from 5-amino-1-(5-phospho-D-ribosyl)imidazole-4-carboxylate: step 1/2. This chain is Phosphoribosylaminoimidazole-succinocarboxamide synthase, found in Wolinella succinogenes (strain ATCC 29543 / DSM 1740 / CCUG 13145 / JCM 31913 / LMG 7466 / NCTC 11488 / FDC 602W) (Vibrio succinogenes).